Here is a 185-residue protein sequence, read N- to C-terminus: MIEASKLKAGMTFESEGKLIRVLEASHHKPGKGNTIMRMKLRDVRTGSTFDTTYRPDEKFEQAIIETVPAQYLYKMDDTAYFMNTDTYDQYEIPVANVEQELLYILENSDVKIQFYGSEVIGVTVPTTVELTVAETQPSIKGATVTGSGKPATLETGLVVNVPDFIEAGQKLIINTAEGTYVSRA.

It belongs to the elongation factor P family.

The protein localises to the cytoplasm. Its pathway is protein biosynthesis; polypeptide chain elongation. In terms of biological role, involved in peptide bond synthesis. Stimulates efficient translation and peptide-bond synthesis on native or reconstituted 70S ribosomes in vitro. Probably functions indirectly by altering the affinity of the ribosome for aminoacyl-tRNA, thus increasing their reactivity as acceptors for peptidyl transferase. This is Elongation factor P from Streptococcus pyogenes serotype M28 (strain MGAS6180).